The primary structure comprises 127 residues: Putative pre-16S rRNA nuclease (127 aa).

The protein belongs to the YqgF nuclease family.

Its subcellular location is the cytoplasm. Functionally, could be a nuclease involved in processing of the 5'-end of pre-16S rRNA. This Campylobacter jejuni subsp. jejuni serotype O:23/36 (strain 81-176) protein is Putative pre-16S rRNA nuclease.